The following is a 538-amino-acid chain: MVAYRFLTLISLGLGSHCASALQYGYNQVSTHKDSAVVAGAFPAINGTHLQSPAFTSPGTVPRGFSDGTSGPTRDETMEGFMRRLARSNSWMTYHKADFKSEEGRKFPYMYLSASKSSIEKPSSHKLRVWLQGGVHGNEPAGDQSMLALLGDLAANQKWAAKLLEKMDILVLPRYNPDGVFYFQRYLATNFDPNRDHIKLARQQTRDIKELFARFSPHIATDMHEFTAGRAFGPKKDIIYAADALFSSAKNLNIDEGIRQLSEKLFAKRMGKDIEAAGLRWDPYIIQGESSSSKLLLREAGTDAKIGRNAMGLSQCVVFLCETRGIGIADQHFERRTLSGLVMVKSILQTAVDNFDEVYNTIERGIRRFTNSRNDIVLTDRSPIMERTFGMLNTTDATLFDYPIDFATTTPAQAVLTRSRPRAYLIPPSWPDIVKRLEVFGVKADKLPHSYVGPVEALNVTSVTFDKEYYEGVVTTTVETKLVERNIRLPAGSYLVKTNQKNAALAFVALEPENIDSFASFGVIPVSTGDQYPIFRVE.

A signal peptide spans 1–21 (MVAYRFLTLISLGLGSHCASA). The N-linked (GlcNAc...) asparagine glycan is linked to N46. A disordered region spans residues 53 to 76 (PAFTSPGTVPRGFSDGTSGPTRDE). One can recognise a Peptidase M14 domain in the interval 71–351 (GPTRDETMEG…VMVKSILQTA (281 aa)). Residues H136, E139, and H224 each contribute to the Zn(2+) site. The active-site Proton donor/acceptor is the E322. 2 N-linked (GlcNAc...) asparagine glycosylation sites follow: N393 and N459.

This sequence belongs to the peptidase M14 family. The cofactor is Zn(2+).

The protein resides in the secreted. Functionally, extracellular metalloprotease that contributes to pathogenicity. The protein is Carboxypeptidase 2 (MCPB) of Trichophyton tonsurans (Scalp ringworm fungus).